Here is a 395-residue protein sequence, read N- to C-terminus: Methylthioribose-1-phosphate isomerase (395 aa).

The active-site Proton donor is Asp-258.

It belongs to the eIF-2B alpha/beta/delta subunits family. MtnA subfamily.

The protein resides in the cytoplasm. It localises to the nucleus. It catalyses the reaction 5-(methylsulfanyl)-alpha-D-ribose 1-phosphate = 5-(methylsulfanyl)-D-ribulose 1-phosphate. The protein operates within amino-acid biosynthesis; L-methionine biosynthesis via salvage pathway; L-methionine from S-methyl-5-thio-alpha-D-ribose 1-phosphate: step 1/6. Its function is as follows. Catalyzes the interconversion of methylthioribose-1-phosphate (MTR-1-P) into methylthioribulose-1-phosphate (MTRu-1-P). The sequence is that of Methylthioribose-1-phosphate isomerase from Podospora anserina (strain S / ATCC MYA-4624 / DSM 980 / FGSC 10383) (Pleurage anserina).